Consider the following 275-residue polypeptide: Shikimate dehydrogenase (NADP(+)) (275 aa).

Residues serine 19 to serine 21 and threonine 66 contribute to the shikimate site. The Proton acceptor role is filled by lysine 70. Shikimate contacts are provided by asparagine 91 and aspartate 106. Residues glycine 129 to alanine 133, asparagine 153 to arginine 158, and isoleucine 219 each bind NADP(+). Shikimate is bound at residue tyrosine 221. Residue glycine 242 coordinates NADP(+).

This sequence belongs to the shikimate dehydrogenase family. As to quaternary structure, homodimer.

The catalysed reaction is shikimate + NADP(+) = 3-dehydroshikimate + NADPH + H(+). The protein operates within metabolic intermediate biosynthesis; chorismate biosynthesis; chorismate from D-erythrose 4-phosphate and phosphoenolpyruvate: step 4/7. Its function is as follows. Involved in the biosynthesis of the chorismate, which leads to the biosynthesis of aromatic amino acids. Catalyzes the reversible NADPH linked reduction of 3-dehydroshikimate (DHSA) to yield shikimate (SA). This chain is Shikimate dehydrogenase (NADP(+)), found in Dictyoglomus thermophilum (strain ATCC 35947 / DSM 3960 / H-6-12).